The sequence spans 432 residues: Muscle cell intermediate filament protein OV71 (432 aa).

Residues K1–L111 are coil 1B. An IF rod domain is found at K1–A277. The linker 12 stretch occupies residues Q112–K128. The segment at N129–A277 is coil 2. The interval G278–S432 is tail. The 118-residue stretch at S310–S427 folds into the LTD domain.

Belongs to the intermediate filament family.

The polypeptide is Muscle cell intermediate filament protein OV71 (OV71) (Onchocerca volvulus).